The chain runs to 712 residues: Polyribonucleotide nucleotidyltransferase (712 aa).

Positions 487 and 493 each coordinate Mg(2+). Residues 554-613 (PRIEVMNIPVDKIREVIGSGGKVIREIVEKTGAKINIEDDGTVKIASSSGKEIEAARKWI) form the KH domain. Residues 623–691 (GQIYEGTVVK…ERGKVRLSMK (69 aa)) enclose the S1 motif domain.

This sequence belongs to the polyribonucleotide nucleotidyltransferase family. Mg(2+) is required as a cofactor.

The protein resides in the cytoplasm. The catalysed reaction is RNA(n+1) + phosphate = RNA(n) + a ribonucleoside 5'-diphosphate. Functionally, involved in mRNA degradation. Catalyzes the phosphorolysis of single-stranded polyribonucleotides processively in the 3'- to 5'-direction. The polypeptide is Polyribonucleotide nucleotidyltransferase (Rhizobium leguminosarum bv. trifolii (strain WSM2304)).